The chain runs to 927 residues: DNA polymerase alpha-binding protein (927 aa).

WD repeat units lie at residues 10–49 (FDFG…EEPE), 134–173 (KIDE…PNKV), 227–266 (AANR…LQKT), and 273–313 (STKA…IHYT). A phosphoserine mark is found at serine 377, serine 379, and serine 398. 2 positions are modified to phosphothreonine: threonine 401 and threonine 411. Serine 463 bears the Phosphoserine mark. One copy of the WD 5 repeat lies at 699 to 739 (GSDNTLLLLSKWRSPEESKWLPILDSNMEIWKMSGGKETTD).

The protein resides in the nucleus. Its function is as follows. Accessory factor for DNA replication. It plays a role in accurately duplicating the genome in vivo. This chain is DNA polymerase alpha-binding protein (CTF4), found in Saccharomyces cerevisiae (strain ATCC 204508 / S288c) (Baker's yeast).